We begin with the raw amino-acid sequence, 680 residues long: Fermitin family homolog 2 (680 aa).

An interaction with membranes containing phosphatidylinositol phosphate region spans residues 40–81 (HIGGVMLKLVEKLDVKKDWSDHALWWEKKRTWLLKTHWTLDK). The disordered stretch occupies residues 141–162 (LKKPRDPTKKKKKKLDDQSEDE). 4 positions are modified to phosphoserine: Ser-159, Ser-181, Ser-339, and Ser-351. Residues 189–661 (MTPTYDAHDG…GYIFLSTRAK (473 aa)) form the FERM domain. Residues 380-476 (KVFKPKKLTL…WMAACRLASK (97 aa)) form the PH domain. Lys-383 provides a ligand contact to a 1,2-diacyl-sn-glycero-3-phospho-(1D-myo-inositol-3,4,5-trisphosphate). Ser-666 is modified (phosphoserine).

Belongs to the kindlin family. In terms of assembly, interacts with ITGB1; the interaction is inhibited in presence of ITGB1BP1. Interacts with FBLIM1. Interacts with active, unphosphorylated CTNNB1. Identified in a complex with CTNNB1 and TCF7L2/TCF4. Interacts with ILK, ITGB1 and ITGB3. As to expression, detected in adult heart muscle (at protein level). Detected in heart, skeletal muscle and testis.

The protein resides in the cytoplasm. It localises to the cell cortex. It is found in the cytoskeleton. Its subcellular location is the stress fiber. The protein localises to the cell junction. The protein resides in the focal adhesion. It localises to the membrane. It is found in the cell projection. Its subcellular location is the lamellipodium membrane. The protein localises to the nucleus. The protein resides in the myofibril. It localises to the sarcomere. It is found in the i band. Its subcellular location is the cell surface. Its function is as follows. Scaffolding protein that enhances integrin activation mediated by TLN1 and/or TLN2, but activates integrins only weakly by itself. Binds to membranes enriched in phosphoinositides. Enhances integrin-mediated cell adhesion onto the extracellular matrix and cell spreading; this requires both its ability to interact with integrins and with phospholipid membranes. Required for the assembly of focal adhesions. Participates in the connection between extracellular matrix adhesion sites and the actin cytoskeleton and also in the orchestration of actin assembly and cell shape modulation. Recruits FBLIM1 to focal adhesions. Plays a role in the TGFB1 and integrin signaling pathways. Stabilizes active CTNNB1 and plays a role in the regulation of transcription mediated by CTNNB1 and TCF7L2/TCF4 and in Wnt signaling. This is Fermitin family homolog 2 (Fermt2) from Mus musculus (Mouse).